A 68-amino-acid polypeptide reads, in one-letter code: Virion membrane protein OPG139 (68 aa).

Residues 1–21 (MIGILLLIGICVAVTVAILYA) form a helical membrane-spanning segment. The Virion surface segment spans residues 22–68 (MYNKIKNSQNPSPNVNLPPPETRNTRFVNNLEKDHISSLYNLVKSSV).

Belongs to the orthopoxvirus OPG139 family. In terms of processing, phosphorylated by a OPG054-independent mechanism.

The protein resides in the virion membrane. Functionally, essential for the encapsidation of DNA into immature virions (IV) and the subsequent maturation of IV into mature virions (MV). This Homo sapiens (Human) protein is Virion membrane protein OPG139 (OPG139).